The chain runs to 167 residues: MAKGGVKKAAAAAARAAANRLMADNRQARHQYEILETLETGIELVGTEVKSIRNGKANLRDGFCLIRNGELQLHNVHISPHSHASAYFNHDPLRTRKLLAHRREIDKLRGQLDKKGLALIPLNIHLKGSWIKITIGVGKGRKLHDKRAADKEKQSKKEVRSAMAKYQ.

Residues 144 to 167 are disordered; it reads HDKRAADKEKQSKKEVRSAMAKYQ. Residues 146-160 are compositionally biased toward basic and acidic residues; that stretch reads KRAADKEKQSKKEVR.

Belongs to the SmpB family.

It localises to the cytoplasm. In terms of biological role, required for rescue of stalled ribosomes mediated by trans-translation. Binds to transfer-messenger RNA (tmRNA), required for stable association of tmRNA with ribosomes. tmRNA and SmpB together mimic tRNA shape, replacing the anticodon stem-loop with SmpB. tmRNA is encoded by the ssrA gene; the 2 termini fold to resemble tRNA(Ala) and it encodes a 'tag peptide', a short internal open reading frame. During trans-translation Ala-aminoacylated tmRNA acts like a tRNA, entering the A-site of stalled ribosomes, displacing the stalled mRNA. The ribosome then switches to translate the ORF on the tmRNA; the nascent peptide is terminated with the 'tag peptide' encoded by the tmRNA and targeted for degradation. The ribosome is freed to recommence translation, which seems to be the essential function of trans-translation. The polypeptide is SsrA-binding protein (Synechococcus sp. (strain CC9902)).